Consider the following 217-residue polypeptide: Adenylate kinase (217 aa).

10–15 contributes to the ATP binding site; that stretch reads GGGKGT. Residues 30–59 are NMP; the sequence is STGDMLRAAVASGSEVGKKAKAVMDAGQLV. AMP is bound by residues T31, R36, 57–59, 85–88, and Q92; these read QLV and GFPR. Residues 126 to 164 are LID; it reads GRYTCAKCGAGYHDKFQLPQVAGKCDSCGGTEFARRPDD. Residue R127 participates in ATP binding. C130, C133, C150, and C153 together coordinate Zn(2+). R161 and R172 together coordinate AMP. M200 is a binding site for ATP.

It belongs to the adenylate kinase family. In terms of assembly, monomer.

It localises to the cytoplasm. The catalysed reaction is AMP + ATP = 2 ADP. It participates in purine metabolism; AMP biosynthesis via salvage pathway; AMP from ADP: step 1/1. Functionally, catalyzes the reversible transfer of the terminal phosphate group between ATP and AMP. Plays an important role in cellular energy homeostasis and in adenine nucleotide metabolism. The chain is Adenylate kinase from Paramagnetospirillum magneticum (strain ATCC 700264 / AMB-1) (Magnetospirillum magneticum).